Consider the following 78-residue polypeptide: TauPI-stichotoxin-Hcr2b (78 aa).

A signal peptide spans 1 to 22 (MKGTFLICLILIAGFSFKSTQA). One can recognise a BPTI/Kunitz inhibitor domain in the interval 26-76 (CLEPKVVGPCTAYFRRFYFDSETGKCTVFIYGGCEGNGNNFETLRACRAIC). Intrachain disulfides connect Cys26-Cys76, Cys35-Cys59, and Cys51-Cys72.

The protein belongs to the venom Kunitz-type family. Sea anemone type 2 potassium channel toxin subfamily.

The protein resides in the secreted. The protein localises to the nematocyst. In terms of biological role, this protease inhibitor shows two different activities, it inhibits both the capsaicin receptor TRPV1 and serine proteases. It partially (max 50%) and reversibly inhibits capsaicin-induced response of TRPV1 (IC(50)=54 nM), a receptor of the pain pathway. The second activity is a weak inhibition of trypsin and chymotrypsin activity (Ki=1 uM and Ki=5 uM, respectively). In vivo, it shows antinociceptive and analgesic activities. It significantly prolongs tail-flick latency and reduces capsaicin-induced acute pain. In vivo, unlike other TRPV1 antagonists whose activity is associated with hyperthermia, this protein has the remarkable feature of dropping core body temperature. This chain is TauPI-stichotoxin-Hcr2b, found in Radianthus crispa (Leathery sea anemone).